Reading from the N-terminus, the 212-residue chain is Pyridoxine/pyridoxamine 5'-phosphate oxidase (212 aa).

FMN contacts are provided by residues 59 to 64 (RMVLMK), 74 to 75 (YS), Lys81, and Gln103. Lys64 is a substrate binding site. Residues Tyr121 and Arg125 each coordinate substrate. Residues 138–139 (QS) and Trp183 each bind FMN. 189-191 (RLH) contacts substrate. Arg193 lines the FMN pocket.

It belongs to the pyridoxamine 5'-phosphate oxidase family. In terms of assembly, homodimer. The cofactor is FMN.

It carries out the reaction pyridoxamine 5'-phosphate + O2 + H2O = pyridoxal 5'-phosphate + H2O2 + NH4(+). The catalysed reaction is pyridoxine 5'-phosphate + O2 = pyridoxal 5'-phosphate + H2O2. Its pathway is cofactor metabolism; pyridoxal 5'-phosphate salvage; pyridoxal 5'-phosphate from pyridoxamine 5'-phosphate: step 1/1. It participates in cofactor metabolism; pyridoxal 5'-phosphate salvage; pyridoxal 5'-phosphate from pyridoxine 5'-phosphate: step 1/1. Functionally, catalyzes the oxidation of either pyridoxine 5'-phosphate (PNP) or pyridoxamine 5'-phosphate (PMP) into pyridoxal 5'-phosphate (PLP). The sequence is that of Pyridoxine/pyridoxamine 5'-phosphate oxidase from Rhodopseudomonas palustris (strain BisB5).